Here is a 48-residue protein sequence, read N- to C-terminus: Large ribosomal subunit protein bL32 (48 aa).

Positions 24–48 are disordered; it reads LPMPIKDKDGSYKMPHRVNPVTKEY.

This sequence belongs to the bacterial ribosomal protein bL32 family.

This is Large ribosomal subunit protein bL32 from Campylobacter lari (strain RM2100 / D67 / ATCC BAA-1060).